The primary structure comprises 1505 residues: ABC transporter C family member 13 (1505 aa).

The next 12 helical transmembrane spans lie at 11–31 (EAAA…LLLL), 54–68 (AVDG…VGAW), 71–91 (AALA…SYEV), 102–122 (ALLL…LAMQ), 131–151 (FPVL…GIAY), 171–191 (MVAN…GVMG), 313–333 (AFAA…SYFV), 336–356 (LSGK…FFVA), 367–387 (WYLG…AMVY), 421–441 (AWYF…LAIL), 447–467 (IAMV…VPVA), and 534–554 (FVFW…CILL). An ABC transmembrane type-1 1 domain is found at 314–589 (FAAVNTIVSY…FPDLISMIAQ (276 aa)). Residues 623–846 (ININDATFSW…GTDFNALVCA (224 aa)) form the ABC transporter 1 domain. Residue 658-665 (GVIGSGKS) coordinates ATP. Over residues 881–897 (DNLKNKVSNNEKPSSTR) the composition is skewed to polar residues. Positions 881 to 919 (DNLKNKVSNNEKPSSTRGIKEKKKKPEERKKKRSVQEEE) are disordered. Residues 904–919 (KKPEERKKKRSVQEEE) show a composition bias toward basic and acidic residues. The next 6 membrane-spanning stretches (helical) occupy residues 940–960 (GTLI…QIAS), 980–1000 (SVVL…FVFV), 1055–1077 (IAFR…AVMS), 1081–1103 (WQVL…YYIA), 1149–1169 (LLDC…WLCL), and 1174–1194 (LSTF…PGTI). Residues 945 to 1215 (LIILAQTMFQ…GLNLNARMSR (271 aa)) form the ABC transmembrane type-1 2 domain. One can recognise an ABC transporter 2 domain in the interval 1262-1496 (IELVDLKVRY…KSSMFMQLVS (235 aa)). 1296–1303 (GRTGSGKS) contributes to the ATP binding site.

The protein belongs to the ABC transporter superfamily. ABCC family. Conjugate transporter (TC 3.A.1.208) subfamily.

The protein localises to the membrane. ABC transporter that may affect phytic acid transport and compartmentalization. May function directly or indirectly in removing phytic acid from the cytosol or in vesicle trafficking. Required for phytic acid accumulation in developing seeds. Phytic acid is the primary storage form of phosphorus in cereal grains and other plant seeds. The polypeptide is ABC transporter C family member 13 (Oryza sativa subsp. indica (Rice)).